A 313-amino-acid polypeptide reads, in one-letter code: Olfactory receptor 5H1 (313 aa).

Residues 1–28 are Extracellular-facing; that stretch reads MEEENATLLTEFVLTGFLYQPQWKIPLF. N-linked (GlcNAc...) asparagine glycosylation is present at Asn-5. A helical membrane pass occupies residues 29-49; sequence LAFLVIYLITIMGNLGLIAVI. The Cytoplasmic portion of the chain corresponds to 50-56; sequence WKDPHLH. The helical transmembrane segment at 57 to 77 threads the bilayer; sequence IPMYLLLGNLAFVDAWISSTV. Over 78-98 the chain is Extracellular; sequence TPKMLNNFLAKSKMISLSECK. Cysteines 97 and 179 form a disulfide. Residues 99 to 119 traverse the membrane as a helical segment; sequence IQFFSFAISVTTECFLLATMA. Over 120–143 the chain is Cytoplasmic; it reads YDRYVAICKPLLYPAIMTNGLCIR. A helical membrane pass occupies residues 144–164; the sequence is LLILSYVGGILHALIHEGFLF. The Extracellular portion of the chain corresponds to 165 to 195; the sequence is RLTFCNSNIVHHIYCDTIPLSKISCTDSSIN. A helical transmembrane segment spans residues 196–216; the sequence is FLMVFIFSGSIQVFSIVTILV. The Cytoplasmic portion of the chain corresponds to 217-240; the sequence is SYTFVLFAILKKKSDKGVRKAFST. A helical transmembrane segment spans residues 241-261; that stretch reads CGAHLFSVSLYYGPLLFIYVG. Topologically, residues 262–271 are extracellular; sequence PASPQADDQD. Residues 272–292 form a helical membrane-spanning segment; it reads MVEPLFYTVIIPLLNPIIYSL. Residues 293 to 313 lie on the Cytoplasmic side of the membrane; sequence RNKQVTVSFTKMLKKHVKVSY.

The protein belongs to the G-protein coupled receptor 1 family.

The protein resides in the cell membrane. In terms of biological role, odorant receptor. This is Olfactory receptor 5H1 (OR5H1) from Homo sapiens (Human).